A 581-amino-acid polypeptide reads, in one-letter code: Arginine--tRNA ligase (581 aa).

The short motif at 131–141 (ANPTGPMHVGH) is the 'HIGH' region element.

This sequence belongs to the class-I aminoacyl-tRNA synthetase family. In terms of assembly, monomer.

It localises to the cytoplasm. The catalysed reaction is tRNA(Arg) + L-arginine + ATP = L-arginyl-tRNA(Arg) + AMP + diphosphate. This Paracoccus denitrificans (strain Pd 1222) protein is Arginine--tRNA ligase.